Reading from the N-terminus, the 309-residue chain is Verprolin (309 aa).

Residues 1 to 13 (MAPAPPPPPPAPA) show a composition bias toward pro residues. The disordered stretch occupies residues 1-273 (MAPAPPPPPP…PNRVDDHGRF (273 aa)). Positions 27 to 44 (DRSALLNSIQKGKKLKKA) constitute a WH2 domain. The span at 82–91 (LPTSSNNTQQ) shows a compositional bias: polar residues. A compositionally biased stretch (pro residues) spans 141–207 (TSAPPRPSIP…PPKVPPPPLS (67 aa)).

Belongs to the verprolin family. In terms of assembly, interacts with wsp1. Interacts with myo1 (via SH3 domain). Interacts with actin monomers.

The protein localises to the cytoplasm. It is found in the cytoskeleton. In terms of biological role, involved in cytoskeletal organization and cellular growth. May exert its effects on the cytoskeleton directly, or indirectly via proline-binding proteins such as profilin or proteins possessing SH3 domains. Plays a role in actin patch assembly by enhancing the ability of myo1 to stimulate actin polymerization by the Arp2/3 complex. In Schizosaccharomyces pombe (strain 972 / ATCC 24843) (Fission yeast), this protein is Verprolin.